The chain runs to 1187 residues: Protein WWC2 (1187 aa).

WW domains follow at residues 10 to 43 (LPLP…DPRD) and 57 to 90 (DELP…DPRK). Coiled-coil stretches lie at residues 121 to 194 (KEQR…YKQQ) and 224 to 256 (ELKS…FHLD). Serine 286 carries the post-translational modification Phosphoserine. Positions 302-423 (LAEKVRLSLQ…EETTKLTTSL (122 aa)) form a coiled coil. The tract at residues 438-464 (SSGSSLGSLASSRGSLNTSSRGSLNSL) is disordered. Positions 697–820 (ETAQVQIGLR…FSNEIFMLWY (124 aa)) constitute a C2 domain. Disordered stretches follow at residues 830 to 849 (CKKN…QPML) and 874 to 963 (ELAQ…ETNT). The stretch at 859–885 (ALLARTSAELLAVEQELAQEEEEEELR) forms a coiled coil. The segment covering 875–884 (LAQEEEEEEL) has biased composition (acidic residues). At threonine 999 the chain carries Phosphothreonine. Serine 1017 bears the Phosphoserine mark. The segment at 1026–1045 (SLFVRNSTERRSLRVKRAVC) is interaction with PRKCZ. Residues 1063-1143 (DLELDLQASL…DLNAERLMRQ (81 aa)) adopt a coiled-coil conformation.

It belongs to the WWC family. In terms of assembly, forms homodimers and heterodimers with WWC1 and WWC3. Interacts with DLC1 and PRKCZ. Interacts (via WW domains) with LATS1 and LATS2.

Its subcellular location is the cytoplasm. The protein localises to the cytosol. Regulator of the Hippo signaling pathway, also known as the Salvador-Warts-Hippo (SWH) pathway. Enhances phosphorylation of LATS1 and YAP1 and negatively regulates cell proliferation and organ growth due to a suppression of the transcriptional activity of YAP1, the major effector of the Hippo pathway. In Mus musculus (Mouse), this protein is Protein WWC2 (Wwc2).